We begin with the raw amino-acid sequence, 418 residues long: Glutamyl-tRNA reductase (418 aa).

Substrate is bound by residues 49 to 52 (TCNR), Ser-109, 114 to 116 (EPQ), and Gln-120. Catalysis depends on Cys-50, which acts as the Nucleophile. 189 to 194 (GAGETI) contacts NADP(+).

The protein belongs to the glutamyl-tRNA reductase family. In terms of assembly, homodimer.

The catalysed reaction is (S)-4-amino-5-oxopentanoate + tRNA(Glu) + NADP(+) = L-glutamyl-tRNA(Glu) + NADPH + H(+). The protein operates within porphyrin-containing compound metabolism; protoporphyrin-IX biosynthesis; 5-aminolevulinate from L-glutamyl-tRNA(Glu): step 1/2. In terms of biological role, catalyzes the NADPH-dependent reduction of glutamyl-tRNA(Glu) to glutamate 1-semialdehyde (GSA). The sequence is that of Glutamyl-tRNA reductase from Pectobacterium atrosepticum (strain SCRI 1043 / ATCC BAA-672) (Erwinia carotovora subsp. atroseptica).